The chain runs to 89 residues: UPF0237 protein lin0537 (89 aa).

Residues 4–78 enclose the ACT domain; sequence VLTVIGKDNV…EELQVKIHIQ (75 aa).

This sequence belongs to the UPF0237 family.

This is UPF0237 protein lin0537 from Listeria innocua serovar 6a (strain ATCC BAA-680 / CLIP 11262).